A 650-amino-acid chain; its full sequence is Secretin OutD (650 aa).

An N-terminal signal peptide occupies residues 1-18 (MLLLSGSVLLMASSLAWS). The interval 20-115 (EFSASFKGTD…LATDRQPGIG (96 aa)) is N0. The interval 117 to 181 (EVVTRVVPVN…TIVERVDQTG (65 aa)) is N1. Residues 182 to 255 (DRNVTTIPLS…MVKQLDRQQA (74 aa)) form an N2 region. Positions 258-330 (GNTKVIYLKY…DLEQVIAQLD (73 aa)) are N3. The interval 335-585 (QVLVEAIIAE…LFIRPSIIRD (251 aa)) is secretin. The interval 587–650 (SQFQSASASK…IVAFYPAGGK (64 aa)) is s domain.

Belongs to the bacterial secretin family. GSP D subfamily. Forms a cylindrical channel with 15 subunits.

The protein localises to the cell outer membrane. Functionally, involved in a type II secretion system (T2SS, formerly general secretion pathway, GSP) for the export of proteins. Required for the translocation of the multiple pectic enzymes. This subunit forms the outer membrane channel. This chain is Secretin OutD (outD), found in Pectobacterium carotovorum subsp. carotovorum (Erwinia carotovora subsp. carotovora).